The chain runs to 231 residues: Uridylate kinase (231 aa).

Residue 9-12 coordinates ATP; it reads KLSG. G49 contributes to the UMP binding site. G50 and R54 together coordinate ATP. UMP-binding positions include D69 and 130–137; that span reads AGMPYFST. Residues N158, Y164, and D167 each coordinate ATP.

It belongs to the UMP kinase family. As to quaternary structure, homohexamer.

It is found in the cytoplasm. It catalyses the reaction UMP + ATP = UDP + ADP. It functions in the pathway pyrimidine metabolism; CTP biosynthesis via de novo pathway; UDP from UMP (UMPK route): step 1/1. Its activity is regulated as follows. Inhibited by UTP. Catalyzes the reversible phosphorylation of UMP to UDP. This is Uridylate kinase from Tropheryma whipplei (strain Twist) (Whipple's bacillus).